Here is a 1113-residue protein sequence, read N- to C-terminus: MNSPNESDGMSGREPSLGILPRTPLHSIPVAVEVKPVLPGAMPSSMGGGGGGSPSPVELRGALAGPMDPALREQQLQQELLVLKQQQQLQKQLLFAEFQKQHDHLTRQHEVQLQKHLKQQQEMLAAKRQQELEQQRQREQQRQEELEKQRLEQQLLILRNKEKSKESAIASTEVKLRLQEFLLSKSKEPTPGGLNHSLPQHPKCWGAHHASLDQSSPPQSGPPGTPPSYKLPLLGPYDSRDDFPLRKTASEPNLKVRSRLKQKVAERRSSPLLRRKDGTVISTFKKRAVEITGTGPGVSSVCNSAPGSGPSSPNSSHSTIAENGFTGSVPNIPTEMIPQHRALPLDSSPNQFSLYTSPSLPNISLGLQATVTVTNSHLTASPKLSTQQEAERQALQSLRQGGTLTGKFMSTSSIPGCLLGVALEGDTSPHGHASLLQHVCSWTGRQQSTLIAVPLHGQSPLVTGERVATSMRTVGKLPRHRPLSRTQSSPLPQSPQALQQLVMQQQHQQFLEKQKQQQMQLGKILTKTGELSRQPTTHPEETEEELTEQQEALLGEGALTIPREGSTESESTQEDLEEEEEEEEEEEEDCIQVKDEDGESGPDEGPDLEESSAGYKKLFADAQQLQPLQVYQAPLSLATVPHQALGRTQSSPAAPGSMKSPTDQPTVVKHLFTTGVVYDTFMLKHQCMCGNTHVHPEHAGRIQSIWSRLQETGLLGKCERIRGRKATLDEIQTVHSEYHTLLYGTSPLNRQKLDSKKLLGPISQKMYAMLPCGGIGVDSDTVWNEMHSSSAVRMAVGCLVELAFKVAAGELKNGFAIIRPPGHHAEESTAMGFCFFNSVAITAKLLQQKLSVGKVLIVDWDIHHGNGTQQAFYNDPSVLYISLHRYDNGNFFPGSGAPEEVGGGPGVGYNVNVAWTGGVDPPIGDVEYLTAFRTVVMPIAQEFSPDVVLVSAGFDAVEGHLSPLGGYSVTARCFGHLTRQLMTLAGGRVVLALEGGHDLTAICDASEACVSALLSVELQPLDEAVLQQKPSVNAVATLEKVIEIQSKHWSCVQRFAAGLGCSLREAQTGEKEEAETVSAMALLSVGAEQAQAVATQEHSPRPAEEPMEQEPAL.

Residues 1–22 (MNSPNESDGMSGREPSLGILPR) form a disordered region. Lys-35 is covalently cross-linked (Glycyl lysine isopeptide (Lys-Gly) (interchain with G-Cter in SUMO2)). 2 disordered regions span residues 39–63 (PGAMPSSMGGGGGGSPSPVELRGAL) and 187–272 (KEPT…SSPL). Residues 238 to 249 (DSRDDFPLRKTA) are compositionally biased toward basic and acidic residues. Ser-250 carries the phosphoserine; by AMPK, CaMK1, SIK1 and PKD/PRKD1 modification. Residues 263–272 (KVAERRSSPL) are compositionally biased toward basic and acidic residues. Residue Thr-283 is modified to Phosphothreonine; by PKC. A disordered region spans residues 472-494 (RTVGKLPRHRPLSRTQSSPLPQS). Residues 484–494 (SRTQSSPLPQS) are compositionally biased toward low complexity. Phosphoserine; by AMPK, CaMK1, SIK1 and PKD/PRKD1 is present on Ser-488. Lys-523 carries the N6-acetyllysine modification. The tract at residues 526–611 (TKTGELSRQP…PDEGPDLEES (86 aa)) is disordered. A compositionally biased stretch (acidic residues) spans 571–610 (STQEDLEEEEEEEEEEEEDCIQVKDEDGESGPDEGPDLEE). 2 positions are modified to phosphoserine: Ser-600 and Ser-650. A histone deacetylase region spans residues 675 to 1019 (GVVYDTFMLK…VSALLSVELQ (345 aa)). Positions 687, 689, 695, and 772 each coordinate Zn(2+). The active site involves His-824. The Nuclear export signal motif lies at 1072–1113 (EEAETVSAMALLSVGAEQAQAVATQEHSPRPAEEPMEQEPAL). The disordered stretch occupies residues 1088-1113 (EQAQAVATQEHSPRPAEEPMEQEPAL). Phosphoserine is present on Ser-1099.

The protein belongs to the histone deacetylase family. HD type 2 subfamily. Interacts with AHRR, BAHD1, BCOR, HDAC7, HDAC9, CTBP1, MEF2C, NCOR2, NRIP1, PHB2 and a 14-3-3 chaperone protein. Interacts with BCL6, DDIT3/CHOP, GRK5, KDM5B and MYOCD. Interacts with EP300 in the presence of TFAP2C. Interacts with ANKRA2. Interacts with CUL7 (as part of the 3M complex); negatively regulated by ANKRA2. Interacts with ZBTB7B; the interaction allows the recruitment of HDAC4 on CD8 loci for deacetylation and possible inhibition of CD8 genes expression. Interacts with RARA. Phosphorylated by AMPK, CaMK1, SIK1 and PRKD1 at Ser-250 and Ser-488. The phosphorylation is required for the export to the cytoplasm and inhibition. Phosphorylated by the PKC kinases PKN1 and PKN2, impairing nuclear import. Phosphorylated by GRK5, leading to nuclear export of HDAC5 and allowing MEF2-mediated transcription. In terms of processing, ubiquitinated. Polyubiquitination however does not lead to its degradation.

It localises to the nucleus. The protein localises to the cytoplasm. It carries out the reaction N(6)-acetyl-L-lysyl-[histone] + H2O = L-lysyl-[histone] + acetate. Functionally, responsible for the deacetylation of lysine residues on the N-terminal part of the core histones (H2A, H2B, H3 and H4). Histone deacetylation gives a tag for epigenetic repression and plays an important role in transcriptional regulation, cell cycle progression and developmental events. Histone deacetylases act via the formation of large multiprotein complexes. Involved in muscle maturation by repressing transcription of myocyte enhancer MEF2C. During muscle differentiation, it shuttles into the cytoplasm, allowing the expression of myocyte enhancer factors. Serves as a corepressor of RARA and causes its deacetylation. In association with RARA, plays a role in the repression of microRNA-10a and thereby in the inflammatory response. The sequence is that of Histone deacetylase 5 (Hdac5) from Mus musculus (Mouse).